The sequence spans 223 residues: Peptidyl-tRNA hydrolase (223 aa).

A tRNA-binding site is contributed by Tyr16. His21 (proton acceptor) is an active-site residue. Residues Phe67, Asn69, and Asn113 each coordinate tRNA.

The protein belongs to the PTH family. Monomer.

The protein localises to the cytoplasm. The enzyme catalyses an N-acyl-L-alpha-aminoacyl-tRNA + H2O = an N-acyl-L-amino acid + a tRNA + H(+). In terms of biological role, hydrolyzes ribosome-free peptidyl-tRNAs (with 1 or more amino acids incorporated), which drop off the ribosome during protein synthesis, or as a result of ribosome stalling. Catalyzes the release of premature peptidyl moieties from peptidyl-tRNA molecules trapped in stalled 50S ribosomal subunits, and thus maintains levels of free tRNAs and 50S ribosomes. The chain is Peptidyl-tRNA hydrolase from Helicobacter hepaticus (strain ATCC 51449 / 3B1).